Consider the following 205-residue polypeptide: Probable thymidylate kinase (205 aa).

7–14 (GIDGSGKS) lines the ATP pocket.

The protein belongs to the thymidylate kinase family.

It carries out the reaction dTMP + ATP = dTDP + ADP. The polypeptide is Probable thymidylate kinase (Methanoculleus marisnigri (strain ATCC 35101 / DSM 1498 / JR1)).